The following is a 501-amino-acid chain: MQLISIFLFICFLFLLRKWKKYSKNSQTKKLPPGPWKLPFIGSMHHLAGGRPHRVLRDLAKKYGPLMHLQLGEVSAVVVTSPDMAKEVLKTHDIAFASRPKLLAMDIICYDRCDIAFSPYGEYWKQMRKICVTEVLSAKSVRSFSSIRCDEVVRLIDSIQSSSSSGELVNFKERVIWFTSSMTCRSAFGQLPKEQDMFIKLIREVIRLAEGFDVADIFPSYKFLHVFGRAKRKLLNVHRKVDAIVEDVINEHKKNFATRKNDDHALGGENLIDVLLKLMNDKSLQFPINNDNIKAIIIDMFAAGTETSSTTTVWAMVEMLKNPRVLAKAQAEVREAFRNKVTFDENDVEDLKYLKLVIKETMRLHAPIPLLVPRECRKETEINGYTIPVKTKVMVNVWALGRDPKYWDDVECFKPERFEQCSIDFIGNNFEYLPFGGGRRICPGTSFGLANDYLPLAQLLCHFDWKLPTGMEPKDLDLTELAGMSAASKDDLYLIATPYQP.

Position 442 (Cys442) interacts with heme.

This sequence belongs to the cytochrome P450 family. It depends on heme as a cofactor.

The polypeptide is Cytochrome P450 71D6 (CYP71D6) (Solanum chacoense (Chaco potato)).